Here is a 224-residue protein sequence, read N- to C-terminus: tRNA (guanine-N(7)-)-methyltransferase (224 aa).

The S-adenosyl-L-methionine site is built by Glu-45, Glu-70, Asp-97, and Asp-119. Asp-119 is a catalytic residue. Substrate-binding positions include Lys-123, Asp-155, and 199–202 (TEYE).

The protein belongs to the class I-like SAM-binding methyltransferase superfamily. TrmB family.

It carries out the reaction guanosine(46) in tRNA + S-adenosyl-L-methionine = N(7)-methylguanosine(46) in tRNA + S-adenosyl-L-homocysteine. It functions in the pathway tRNA modification; N(7)-methylguanine-tRNA biosynthesis. In terms of biological role, catalyzes the formation of N(7)-methylguanine at position 46 (m7G46) in tRNA. The chain is tRNA (guanine-N(7)-)-methyltransferase from Ureaplasma parvum serovar 3 (strain ATCC 27815 / 27 / NCTC 11736).